The sequence spans 158 residues: NAD(P)H-quinone oxidoreductase subunit J, chloroplastic (158 aa).

This sequence belongs to the complex I 30 kDa subunit family. In terms of assembly, NDH is composed of at least 16 different subunits, 5 of which are encoded in the nucleus.

Its subcellular location is the plastid. The protein resides in the chloroplast thylakoid membrane. The catalysed reaction is a plastoquinone + NADH + (n+1) H(+)(in) = a plastoquinol + NAD(+) + n H(+)(out). It carries out the reaction a plastoquinone + NADPH + (n+1) H(+)(in) = a plastoquinol + NADP(+) + n H(+)(out). Functionally, NDH shuttles electrons from NAD(P)H:plastoquinone, via FMN and iron-sulfur (Fe-S) centers, to quinones in the photosynthetic chain and possibly in a chloroplast respiratory chain. The immediate electron acceptor for the enzyme in this species is believed to be plastoquinone. Couples the redox reaction to proton translocation, and thus conserves the redox energy in a proton gradient. The chain is NAD(P)H-quinone oxidoreductase subunit J, chloroplastic from Solanum tuberosum (Potato).